Reading from the N-terminus, the 367-residue chain is Nociceptin receptor (367 aa).

The Extracellular segment spans residues 1-45 (MESLFPAPFWEVLYGSHFQGNLSLLNETVPHHLLLNASHSAFLPL). N-linked (GlcNAc...) asparagine glycosylation is found at N21, N26, and N36. Residues 46–71 (GLKVTIVGLYLAVCIGGLLGNCLVMY) traverse the membrane as a helical segment. Topologically, residues 72–84 (VILRHTKMKTATN) are cytoplasmic. Residues 85 to 106 (IYIFNLALADTLVLLTLPFQGT) traverse the membrane as a helical segment. Over 107–121 (DILLGFWPFGNALCK) the chain is Extracellular. Cysteines 120 and 197 form a disulfide. The chain crosses the membrane as a helical span at residues 122 to 143 (TVIAIDYYNMFTSTFTLTAMSV). Residues 144 to 162 (DRYVAICHPIRALDVRTSS) lie on the Cytoplasmic side of the membrane. The helical transmembrane segment at 163–185 (KAQAVNVAIWALASVVGVPVAIM) threads the bilayer. Residues 186 to 208 (GSAQVEDEEIECLVEIPAPQDYW) are Extracellular-facing. A helical transmembrane segment spans residues 209-233 (GPVFAICIFLFSFIIPVLIISVCYS). Residues 234 to 261 (LMIRRLRGVRLLSGSREKDRNLRRITRL) lie on the Cytoplasmic side of the membrane. Residues 262-282 (VLVVVAVFVGCWTPVQVFVLV) form a helical membrane-spanning segment. Over 283–297 (QGLGVQPGSETAVAI) the chain is Extracellular. Residues 298-319 (LRFCTALGYVNSCLNPILYAFL) traverse the membrane as a helical segment. Residues 320–367 (DENFKACFRKFCCASALHREMQVSDRVRSIAKDVGLGCKTSETVPRPA) lie on the Cytoplasmic side of the membrane. A lipid anchor (S-palmitoyl cysteine) is attached at C331.

The protein belongs to the G-protein coupled receptor 1 family. In terms of processing, phosphorylation at Ser-360 requires GRK3. In terms of tissue distribution, in the brain, isoform KOR3 and isoform KOR3C are most abundant in hypothalamus and periaqueductal gray. Isoform KOR3A is highly expressed in cortex, striatum and brainstem. Isoform KOR3D is highly expressed in cerebellum, hypothalamus and brainstem. Detected in spleen lymphocytes.

Its subcellular location is the cell membrane. The protein localises to the cytoplasmic vesicle. G-protein coupled opioid receptor that functions as a receptor for the endogenous neuropeptide nociceptin. Ligand binding causes a conformation change that triggers signaling via guanine nucleotide-binding proteins (G proteins) and modulates the activity of down-stream effectors. Signaling via G proteins mediates inhibition of adenylate cyclase activity and calcium channel activity. Arrestins modulate signaling via G proteins and mediate the activation of alternative signaling pathways that lead to the activation of MAP kinases. Plays a role in modulating nociception and the perception of pain. Plays a role in the regulation of locomotor activity by the neuropeptide nociceptin. This Mus musculus (Mouse) protein is Nociceptin receptor (Oprl1).